Reading from the N-terminus, the 71-residue chain is Sodium channel neurotoxin MeuNaTxalpha-12 (71 aa).

Residues 1–6 (MTGVES) form the signal peptide. Residues 8-70 (RDAYIAQGNN…VPIRIQGKCQ (63 aa)) form the LCN-type CS-alpha/beta domain. 4 cysteine pairs are disulfide-bonded: Cys-18–Cys-69, Cys-22–Cys-42, Cys-28–Cys-52, and Cys-32–Cys-54. Position 71 (Arg-71) is a propeptide, removed by a carboxypeptidase.

It belongs to the long (4 C-C) scorpion toxin superfamily. Sodium channel inhibitor family. Alpha subfamily. As to expression, expressed by the venom gland.

It is found in the secreted. Alpha toxins bind voltage-independently at site-3 of sodium channels (Nav) and inhibit the inactivation of the activated channels, thereby blocking neuronal transmission. This is Sodium channel neurotoxin MeuNaTxalpha-12 from Mesobuthus eupeus (Lesser Asian scorpion).